Reading from the N-terminus, the 82-residue chain is Small ribosomal subunit protein bS18A (82 aa).

The protein belongs to the bacterial ribosomal protein bS18 family. As to quaternary structure, part of the 30S ribosomal subunit. Forms a tight heterodimer with protein bS6.

Functionally, binds as a heterodimer with protein bS6 to the central domain of the 16S rRNA, where it helps stabilize the platform of the 30S subunit. The sequence is that of Small ribosomal subunit protein bS18A from Streptomyces griseus subsp. griseus (strain JCM 4626 / CBS 651.72 / NBRC 13350 / KCC S-0626 / ISP 5235).